Reading from the N-terminus, the 264-residue chain is Thymidylate synthase (264 aa).

Position 21 (Arg21) interacts with dUMP. Position 51 (His51) interacts with (6R)-5,10-methylene-5,6,7,8-tetrahydrofolate. 126–127 (RR) serves as a coordination point for dUMP. The Nucleophile role is filled by Cys146. DUMP contacts are provided by residues 166–169 (RSCD), Asn177, and 207–209 (HLY). Asp169 provides a ligand contact to (6R)-5,10-methylene-5,6,7,8-tetrahydrofolate. Position 263 (Ala263) interacts with (6R)-5,10-methylene-5,6,7,8-tetrahydrofolate.

This sequence belongs to the thymidylate synthase family. Bacterial-type ThyA subfamily. In terms of assembly, homodimer.

The protein localises to the cytoplasm. The catalysed reaction is dUMP + (6R)-5,10-methylene-5,6,7,8-tetrahydrofolate = 7,8-dihydrofolate + dTMP. It functions in the pathway pyrimidine metabolism; dTTP biosynthesis. Functionally, catalyzes the reductive methylation of 2'-deoxyuridine-5'-monophosphate (dUMP) to 2'-deoxythymidine-5'-monophosphate (dTMP) while utilizing 5,10-methylenetetrahydrofolate (mTHF) as the methyl donor and reductant in the reaction, yielding dihydrofolate (DHF) as a by-product. This enzymatic reaction provides an intracellular de novo source of dTMP, an essential precursor for DNA biosynthesis. The chain is Thymidylate synthase from Aeromonas hydrophila subsp. hydrophila (strain ATCC 7966 / DSM 30187 / BCRC 13018 / CCUG 14551 / JCM 1027 / KCTC 2358 / NCIMB 9240 / NCTC 8049).